Here is a 223-residue protein sequence, read N- to C-terminus: Phosphoribosylformylglycinamidine synthase subunit PurQ (223 aa).

In terms of domain architecture, Glutamine amidotransferase type-1 spans 4–223 (KIGVITFPGT…FLSAVGTIAA (220 aa)). Cys87 functions as the Nucleophile in the catalytic mechanism. Catalysis depends on residues His195 and Glu197.

In terms of assembly, part of the FGAM synthase complex composed of 1 PurL, 1 PurQ and 2 PurS subunits.

It localises to the cytoplasm. The catalysed reaction is N(2)-formyl-N(1)-(5-phospho-beta-D-ribosyl)glycinamide + L-glutamine + ATP + H2O = 2-formamido-N(1)-(5-O-phospho-beta-D-ribosyl)acetamidine + L-glutamate + ADP + phosphate + H(+). It carries out the reaction L-glutamine + H2O = L-glutamate + NH4(+). Its pathway is purine metabolism; IMP biosynthesis via de novo pathway; 5-amino-1-(5-phospho-D-ribosyl)imidazole from N(2)-formyl-N(1)-(5-phospho-D-ribosyl)glycinamide: step 1/2. Part of the phosphoribosylformylglycinamidine synthase complex involved in the purines biosynthetic pathway. Catalyzes the ATP-dependent conversion of formylglycinamide ribonucleotide (FGAR) and glutamine to yield formylglycinamidine ribonucleotide (FGAM) and glutamate. The FGAM synthase complex is composed of three subunits. PurQ produces an ammonia molecule by converting glutamine to glutamate. PurL transfers the ammonia molecule to FGAR to form FGAM in an ATP-dependent manner. PurS interacts with PurQ and PurL and is thought to assist in the transfer of the ammonia molecule from PurQ to PurL. The polypeptide is Phosphoribosylformylglycinamidine synthase subunit PurQ (Corynebacterium glutamicum (strain ATCC 13032 / DSM 20300 / JCM 1318 / BCRC 11384 / CCUG 27702 / LMG 3730 / NBRC 12168 / NCIMB 10025 / NRRL B-2784 / 534)).